The chain runs to 545 residues: Sphingosine-1-phosphate lyase (545 aa).

At 1–26 the chain is on the lumenal side; sequence MRPFSGSDCLKPVTEGINRAFGAKEP. A helical; Signal-anchor for type III membrane protein transmembrane segment spans residues 27-47; sequence WQVATITATTVLGGVWLWTVI. At 48–545 the chain is on the cytoplasmic side; that stretch reads CQDENLYIRG…HSMYYTPSQK (498 aa). K342 is modified (N6-(pyridoxal phosphate)lysine).

It belongs to the group II decarboxylase family. Sphingosine-1-phosphate lyase subfamily. Pyridoxal 5'-phosphate is required as a cofactor. Localized to the developing gut primordium during embryogenesis.

Its subcellular location is the endoplasmic reticulum membrane. The enzyme catalyses sphinganine 1-phosphate = hexadecanal + phosphoethanolamine. It functions in the pathway lipid metabolism; sphingolipid metabolism. Functionally, cleaves phosphorylated sphingoid bases (PSBs), such as sphingosine-1-phosphate, into fatty aldehydes and phosphoethanolamine. Sphingolipid catabolism is required for normal development including viability, reproduction and muscle development. This Drosophila melanogaster (Fruit fly) protein is Sphingosine-1-phosphate lyase.